A 489-amino-acid chain; its full sequence is 3-octaprenyl-4-hydroxybenzoate carboxy-lyase (489 aa).

A Mn(2+)-binding site is contributed by N172. Prenylated FMN-binding positions include 175 to 177 (IYR), 189 to 191 (RWL), and 194 to 195 (RG). Residue E238 coordinates Mn(2+). D287 functions as the Proton donor in the catalytic mechanism.

It belongs to the UbiD family. In terms of assembly, homohexamer. Prenylated FMN serves as cofactor. The cofactor is Mn(2+).

It is found in the cell membrane. It catalyses the reaction a 4-hydroxy-3-(all-trans-polyprenyl)benzoate + H(+) = a 2-(all-trans-polyprenyl)phenol + CO2. It functions in the pathway cofactor biosynthesis; ubiquinone biosynthesis. Its function is as follows. Catalyzes the decarboxylation of 3-octaprenyl-4-hydroxy benzoate to 2-octaprenylphenol, an intermediate step in ubiquinone biosynthesis. The polypeptide is 3-octaprenyl-4-hydroxybenzoate carboxy-lyase (Psychromonas ingrahamii (strain DSM 17664 / CCUG 51855 / 37)).